We begin with the raw amino-acid sequence, 223 residues long: Translation initiation factor 6 (223 aa).

The protein belongs to the eIF-6 family.

Its function is as follows. Binds to the 50S ribosomal subunit and prevents its association with the 30S ribosomal subunit to form the 70S initiation complex. This Sulfurisphaera tokodaii (strain DSM 16993 / JCM 10545 / NBRC 100140 / 7) (Sulfolobus tokodaii) protein is Translation initiation factor 6.